A 538-amino-acid chain; its full sequence is Coiled-coil domain-containing protein 8 (538 aa).

Positions 58–128 (IMEKSTPHPP…QGPRRGKKVR (71 aa)) are disordered. Basic residues predominate over residues 119 to 128 (QGPRRGKKVR). Residues Ser142, Ser146, and Ser261 each carry the phosphoserine modification. The disordered stretch occupies residues 213 to 473 (WAPRAGPGVG…GTAPGARARK (261 aa)). The span at 301–313 (DSQREEAIADQRE) shows a compositional bias: basic and acidic residues. Over residues 321–332 (AGAPADQGAEAA) the composition is skewed to low complexity. Residues 349–366 (AEEGAEAADNQREEAADN) are a coiled coil. Composition is skewed to basic and acidic residues over residues 357–373 (DNQR…EAPA), 381–392 (DNHREEAADNQR), and 405–419 (DNQR…RERA). 2 stretches are compositionally biased toward low complexity: residues 428–438 (QRAQARAGQRA) and 458–469 (AAQGTTGTAPGA). The PxLPxI/L motif; mediates interaction with ANKRA2 motif lies at 500 to 506 (PRLPTLP). The stretch at 514-535 (EARNLRVLRAEARAEAEQGEQE) forms a coiled coil.

Component of the 3M complex, composed of core components CUL7, CCDC8 and OBSL1. Interacts (via PxLPxI/L motif) with ANKRA2 (via ankyrin repeats); may link the 3M complex to histone deacetylases including HDAC4 and HDAC5. In terms of tissue distribution, widely expressed with low levels in spleen, skeletal muscle, small intestine, kidney and liver.

Its subcellular location is the cytoplasm. It localises to the cytoskeleton. The protein resides in the microtubule organizing center. It is found in the centrosome. Its function is as follows. Core component of the 3M complex, a complex required to regulate microtubule dynamics and genome integrity. It is unclear how the 3M complex regulates microtubules, it could act by controlling the level of a microtubule stabilizer. Required for localization of CUL7 to the centrosome. The sequence is that of Coiled-coil domain-containing protein 8 (CCDC8) from Homo sapiens (Human).